We begin with the raw amino-acid sequence, 624 residues long: (-)-beta-phellandrene synthase 4, chloroplastic (624 aa).

The N-terminal 48 residues, 1–48, are a transit peptide targeting the chloroplast; that stretch reads MAIVSSVPLASKSCLHKSLISSIHKLKPFCRTIPTLGMSRPGKSVMPS. The segment at 41-60 is disordered; it reads PGKSVMPSMSMSSPVSDDGV. Low complexity predominate over residues 44–56; sequence SVMPSMSMSSPVS. Mg(2+) is bound by residues Asp375, Asp379, and Asp527. Positions 375–379 match the DDXXD motif motif; it reads DDMYD.

This sequence belongs to the terpene synthase family. Tpsd subfamily. Mg(2+) is required as a cofactor. Mn(2+) serves as cofactor.

The protein localises to the plastid. The protein resides in the chloroplast. The catalysed reaction is (2E)-geranyl diphosphate = (-)-beta-phellandrene + diphosphate. Its pathway is terpene metabolism; oleoresin biosynthesis. Terpene synthase (TPS) involved in the biosynthesis of monoterpene natural products included in conifer oleoresin secretions and volatile emissions; these compounds contribute to biotic and abiotic stress defense against herbivores and pathogens. Catalyzes the conversion of (2E)-geranyl diphosphate (GPP) to (-)-beta-phellandrene. The sequence is that of (-)-beta-phellandrene synthase 4, chloroplastic from Picea sitchensis (Sitka spruce).